We begin with the raw amino-acid sequence, 416 residues long: Isobutyryl-CoA dehydrogenase, mitochondrial (416 aa).

The transit peptide at 1–23 directs the protein to the mitochondrion; it reads MMLRGGCQRVGARLRGLRRGPRG. Residue Lys51 is modified to N6-acetyllysine; alternate. N6-succinyllysine; alternate is present on Lys51. FAD contacts are provided by residues 159 to 168 and 192 to 194; these read YCLTEPGSGS and FIS. Ser168 serves as a coordination point for substrate. The residue at position 232 (Lys232) is an N6-acetyllysine. An N6-succinyllysine modification is found at Lys272. Substrate is bound at residue 275-278; the sequence is NGGR. FAD-binding positions include Arg303, 313 to 314, and 372 to 376; these read SQ and QMHGG. Glu399 functions as the Proton acceptor in the catalytic mechanism. FAD is bound at residue 401-403; sequence SNE. Arg411 serves as a coordination point for substrate.

Belongs to the acyl-CoA dehydrogenase family. Homotetramer, formed by a dimer of dimers. Requires FAD as cofactor.

Its subcellular location is the mitochondrion. It catalyses the reaction 2-methylpropanoyl-CoA + oxidized [electron-transfer flavoprotein] + H(+) = 2-methylpropenoyl-CoA + reduced [electron-transfer flavoprotein]. The enzyme catalyses (2S)-2-methylbutanoyl-CoA + oxidized [electron-transfer flavoprotein] + H(+) = (2E)-2-methylbut-2-enoyl-CoA + reduced [electron-transfer flavoprotein]. It carries out the reaction propanoyl-CoA + oxidized [electron-transfer flavoprotein] + H(+) = acryloyl-CoA + reduced [electron-transfer flavoprotein]. It participates in amino-acid degradation; L-valine degradation. Its function is as follows. Isobutyryl-CoA dehydrogenase which catalyzes the conversion of 2-methylpropanoyl-CoA to (2E)-2-methylpropenoyl-CoA in the valine catabolic pathway. To a lesser extent, also able to catalyze the oxidation of (2S)-2-methylbutanoyl-CoA. In Bos taurus (Bovine), this protein is Isobutyryl-CoA dehydrogenase, mitochondrial (ACAD8).